We begin with the raw amino-acid sequence, 461 residues long: Ornithine decarboxylase (461 aa).

Residue Lys-69 is modified to N6-(pyridoxal phosphate)lysine. Pyridoxal 5'-phosphate is bound by residues Ser-200, Gly-237, and 274 to 277; that span reads EPGR. Ser-303 is subject to Phosphoserine; by CK2. 331–332 contributes to the substrate binding site; it reads YD. The active-site Proton donor; shared with dimeric partner is Cys-360. Position 360 is an S-nitrosocysteine (Cys-360). Asp-361 lines the substrate pocket. Tyr-389 contributes to the pyridoxal 5'-phosphate binding site.

This sequence belongs to the Orn/Lys/Arg decarboxylase class-II family. In terms of assembly, homodimer. Only the dimer is catalytically active, as the active sites are constructed of residues from both monomers. It depends on pyridoxal 5'-phosphate as a cofactor.

It carries out the reaction L-ornithine + H(+) = putrescine + CO2. It participates in amine and polyamine biosynthesis; putrescine biosynthesis via L-ornithine pathway; putrescine from L-ornithine: step 1/1. Its activity is regulated as follows. Inhibited by antizymes (AZs) OAZ1, OAZ2 and OAZ3 in response to polyamine levels. AZs inhibit the assembly of the functional homodimer by binding to ODC monomers. Additionally, OAZ1 targets ODC monomers for ubiquitin-independent proteolytic destruction by the 26S proteasome. Functionally, catalyzes the first and rate-limiting step of polyamine biosynthesis that converts ornithine into putrescine, which is the precursor for the polyamines, spermidine and spermine. Polyamines are essential for cell proliferation and are implicated in cellular processes, ranging from DNA replication to apoptosis. This chain is Ornithine decarboxylase (Odc1), found in Rattus norvegicus (Rat).